A 574-amino-acid polypeptide reads, in one-letter code: Serine/threonine-protein kinase B (574 aa).

Positions 34 to 301 constitute a Protein kinase domain; that stretch reads YQTLGLLGKG…VLDALEMPTY (268 aa). ATP is bound by residues 40 to 48 and lysine 65; that span reads LGKGGFGAT. The Proton acceptor role is filled by aspartate 163. The disordered stretch occupies residues 319 to 407; it reads GAGDEPATGI…GGSVGAGGID (89 aa). A compositionally biased stretch (polar residues) spans 343 to 364; the sequence is TRFNTNVQPRDPSSTSLNTGIK. 2 consecutive Pentapeptide repeat domains span residues 454 to 493 and 504 to 543; these read QNLV…DFGK and ANLS…NFSG.

The protein belongs to the protein kinase superfamily. Ser/Thr protein kinase family. In terms of processing, autophosphorylated.

It carries out the reaction L-seryl-[protein] + ATP = O-phospho-L-seryl-[protein] + ADP + H(+). The catalysed reaction is L-threonyl-[protein] + ATP = O-phospho-L-threonyl-[protein] + ADP + H(+). Its function is as follows. Protein kinase required for cell motility, but not for phototaxis. The sequence is that of Serine/threonine-protein kinase B (spkB) from Synechocystis sp. (strain ATCC 27184 / PCC 6803 / Kazusa).